Consider the following 998-residue polypeptide: Ephrin type-B receptor 3 (998 aa).

An N-terminal signal peptide occupies residues 1–33 (MARARPPPPPSPPPGLLPLLPPLLLLPLLLLPA). At 34 to 559 (GCRALEETLM…AQQLQEQLPL (526 aa)) the chain is on the extracellular side. An Eph LBD domain is found at 39-217 (EETLMDTKWV…FYKKCASTTA (179 aa)). Cysteine 81 and cysteine 199 form a disulfide bridge. 2 consecutive Fibronectin type-III domains span residues 339 to 451 (VPSP…TNQA) and 452 to 545 (APSE…TTSE). N-linked (GlcNAc...) asparagine glycosylation is found at asparagine 351 and asparagine 445. The chain crosses the membrane as a helical span at residues 560-580 (IVGSATAGLVFVVAVVVIAIV). The Cytoplasmic segment spans residues 581–998 (CLRKQRHGSD…QMNQTLPVQV (418 aa)). Tyrosine 614 is modified (phosphotyrosine; by autocatalysis). Residues 633–896 (VKIEEVIGAG…QIVNTLDKLI (264 aa)) form the Protein kinase domain. ATP-binding positions include 639 to 647 (IGAGEFGEV) and lysine 665. The Proton acceptor role is filled by aspartate 758. The SAM domain maps to 925 to 989 (TTFTTVGDWL…LSSIQDMRLQ (65 aa)). The short motif at 996 to 998 (VQV) is the PDZ-binding element.

This sequence belongs to the protein kinase superfamily. Tyr protein kinase family. Ephrin receptor subfamily. In terms of assembly, heterotetramer upon binding of the ligand. The heterotetramer is composed of an ephrin dimer and a receptor dimer. Oligomerization is probably required to induce biological responses. Phosphorylated. Autophosphorylates upon ligand-binding. Autophosphorylation on Tyr-614 is required for interaction with SH2 domain-containing proteins. In terms of processing, ubiquitinated by RNF186, mainly through 'Lys-48' and 'Lys-63'-linked polyubiquitin chains. As to expression, ubiquitous.

The protein localises to the cell membrane. Its subcellular location is the cell projection. It localises to the dendrite. The enzyme catalyses L-tyrosyl-[protein] + ATP = O-phospho-L-tyrosyl-[protein] + ADP + H(+). Functionally, receptor tyrosine kinase which binds promiscuously transmembrane ephrin-B family ligands residing on adjacent cells, leading to contact-dependent bidirectional signaling into neighboring cells. The signaling pathway downstream of the receptor is referred to as forward signaling while the signaling pathway downstream of the ephrin ligand is referred to as reverse signaling. Generally has an overlapping and redundant function with EPHB2. Like EPHB2, functions in axon guidance during development regulating for instance the neurons forming the corpus callosum and the anterior commissure, 2 major interhemispheric connections between the temporal lobes of the cerebral cortex. In addition to its role in axon guidance also plays an important redundant role with other ephrin-B receptors in development and maturation of dendritic spines and the formation of excitatory synapses. Controls other aspects of development through regulation of cell migration and positioning. This includes angiogenesis, palate development and thymic epithelium development for instance. Forward and reverse signaling through the EFNB2/EPHB3 complex also regulate migration and adhesion of cells that tubularize the urethra and septate the cloaca. Finally, plays an important role in intestinal epithelium differentiation segregating progenitor from differentiated cells in the crypt. The polypeptide is Ephrin type-B receptor 3 (EPHB3) (Homo sapiens (Human)).